The following is a 63-amino-acid chain: Beta-glucosidase A-3 (63 aa).

Asp-12 is an active-site residue. Asn-48 and Asn-56 each carry an N-linked (GlcNAc...) asparagine glycan.

Belongs to the glycosyl hydrolase 3 family.

The enzyme catalyses Hydrolysis of terminal, non-reducing beta-D-glucosyl residues with release of beta-D-glucose.. The protein operates within glycan metabolism; cellulose degradation. The sequence is that of Beta-glucosidase A-3 from Aspergillus wentii.